A 70-amino-acid chain; its full sequence is Homeobox protein CDX (70 aa).

The segment at residues 1–60 (PDKYRVVYTDYQRLELEKEFHYSRYITMNRKAELAKSLDLTERQIKIWFQNRRAKERKIN) is a DNA-binding region (homeobox).

Belongs to the Caudal homeobox family.

It is found in the nucleus. This is Homeobox protein CDX (CDX) from Lineus sanguineus (Ribbon worm).